The primary structure comprises 273 residues: Dermonecrotic toxin LapSicTox-alphaII1 (273 aa).

The active site involves His-5. Residues Glu-25 and Asp-27 each coordinate Mg(2+). His-41 acts as the Nucleophile in catalysis. 2 disulfide bridges follow: Cys-45–Cys-51 and Cys-47–Cys-191. Asp-85 provides a ligand contact to Mg(2+).

This sequence belongs to the arthropod phospholipase D family. Class II subfamily. It depends on Mg(2+) as a cofactor. Expressed by the venom gland.

The protein localises to the secreted. It carries out the reaction an N-(acyl)-sphingosylphosphocholine = an N-(acyl)-sphingosyl-1,3-cyclic phosphate + choline. The enzyme catalyses an N-(acyl)-sphingosylphosphoethanolamine = an N-(acyl)-sphingosyl-1,3-cyclic phosphate + ethanolamine. It catalyses the reaction a 1-acyl-sn-glycero-3-phosphocholine = a 1-acyl-sn-glycero-2,3-cyclic phosphate + choline. The catalysed reaction is a 1-acyl-sn-glycero-3-phosphoethanolamine = a 1-acyl-sn-glycero-2,3-cyclic phosphate + ethanolamine. In terms of biological role, dermonecrotic toxins cleave the phosphodiester linkage between the phosphate and headgroup of certain phospholipids (sphingolipid and lysolipid substrates), forming an alcohol (often choline) and a cyclic phosphate. This toxin acts on sphingomyelin (SM). It may also act on ceramide phosphoethanolamine (CPE), lysophosphatidylcholine (LPC) and lysophosphatidylethanolamine (LPE), but not on lysophosphatidylserine (LPS), and lysophosphatidylglycerol (LPG). It acts by transphosphatidylation, releasing exclusively cyclic phosphate products as second products. Induces dermonecrosis, hemolysis, increased vascular permeability, edema, inflammatory response, and platelet aggregation. This chain is Dermonecrotic toxin LapSicTox-alphaII1, found in Loxosceles apachea (Apache recluse spider).